Reading from the N-terminus, the 472-residue chain is Ribosomal protein uS12 methylthiotransferase RimO (472 aa).

An MTTase N-terminal domain is found at 33–143; it reads NRIGFVSLGC…VLKHVHKYVP (111 aa). Residues Cys-42, Cys-78, Cys-107, Cys-175, Cys-179, and Cys-182 each coordinate [4Fe-4S] cluster. The Radical SAM core domain maps to 161-398; it reads LTPKHYAYLK…MEVQAEISAE (238 aa). The region spanning 401–467 is the TRAM domain; it reads ARFVGRTLDI…EHDLWAEVVD (67 aa).

It belongs to the methylthiotransferase family. RimO subfamily. The cofactor is [4Fe-4S] cluster.

It localises to the cytoplasm. It catalyses the reaction L-aspartate(89)-[ribosomal protein uS12]-hydrogen + (sulfur carrier)-SH + AH2 + 2 S-adenosyl-L-methionine = 3-methylsulfanyl-L-aspartate(89)-[ribosomal protein uS12]-hydrogen + (sulfur carrier)-H + 5'-deoxyadenosine + L-methionine + A + S-adenosyl-L-homocysteine + 2 H(+). Catalyzes the methylthiolation of an aspartic acid residue of ribosomal protein uS12. This is Ribosomal protein uS12 methylthiotransferase RimO from Shewanella baltica (strain OS195).